Consider the following 1400-residue polypeptide: Macrophage-stimulating protein receptor (1400 aa).

An N-terminal signal peptide occupies residues 1–24; it reads MELLPPLPQSFLLLLLLPAKPAAG. The Extracellular portion of the chain corresponds to 25 to 957; it reads EDWQCPRTPY…PGPDGVPQST (933 aa). One can recognise a Sema domain in the interval 31 to 522; sequence RTPYAASRDF…SGDQVFQVPI (492 aa). The N-linked (GlcNAc...) asparagine glycan is linked to Asn-66. Cystine bridges form between Cys-101–Cys-104, Cys-107–Cys-162, Cys-135–Cys-143, Cys-174–Cys-177, Cys-300–Cys-367, Cys-385–Cys-407, and Cys-386–Cys-422. N-linked (GlcNAc...) asparagine glycosylation is found at Asn-419, Asn-458, and Asn-488. Disulfide bonds link Cys-527/Cys-545, Cys-533/Cys-567, Cys-536/Cys-552, and Cys-548/Cys-558. IPT/TIG domains follow at residues 569-671, 684-767, and 770-860; these read PKLT…FRVD, PVLI…FQYR, and PVVL…FRFL. 4 N-linked (GlcNAc...) asparagine glycosylation sites follow: Asn-654, Asn-720, Asn-841, and Asn-897. Residues 958 to 978 traverse the membrane as a helical segment; it reads LLGILLPLLLLVAALATALVF. Residues 979 to 1400 lie on the Cytoplasmic side of the membrane; it reads SYWWRRKQLV…RPLSEPPRPT (422 aa). The Protein kinase domain maps to 1082–1345; it reads THSDRVIGKG…VLVGEVEQIV (264 aa). ATP contacts are provided by residues 1088–1096, Lys-1114, and 1161–1164; these read IGKGHFGVV and LPYM. Residue Asp-1208 is the Proton acceptor of the active site. Arg-1212 provides a ligand contact to ATP. Tyr-1238, Tyr-1239, Tyr-1353, and Tyr-1360 each carry phosphotyrosine; by autocatalysis. The disordered stretch occupies residues 1367 to 1400; sequence TSHEMNVRPEQPQFSPMPGNVRRPRPLSEPPRPT.

Belongs to the protein kinase superfamily. Tyr protein kinase family. In terms of assembly, heterodimer of an alpha chain and a beta chain which are disulfide linked. Binds PLXNB1. Associates with and is negatively regulated by HYAL2. Interacts when phosphorylated with downstream effectors including PIK3R1, PCLG1, GRB2 and GAB1. Interacts with integrin beta1/ITGB1 in a ligand-independent fashion. Post-translationally, proteolytic processing yields the two subunits. Autophosphorylated in response to ligand binding on Tyr-1238 and Tyr-1239 in the kinase domain leading to further phosphorylation of Tyr-1353 and Tyr-1360 in the C-terminal multifunctional docking site. In terms of processing, ubiquitinated. Ubiquitination by CBL regulates the receptor stability and activity through proteasomal degradation. Post-translationally, O-mannosylation of IPT/TIG domains on Thr or Ser residues by TMEM260 is required for protein maturation. O-mannosylated residues are composed of single mannose glycans that are not elongated or modified. As to expression, expressed in colon, skin, lung and bone marrow.

The protein localises to the membrane. It catalyses the reaction L-tyrosyl-[protein] + ATP = O-phospho-L-tyrosyl-[protein] + ADP + H(+). In its inactive state, the C-terminal tail interacts with the catalytic domain and inhibits the kinase activity. Upon ligand binding, the C-terminal tail is displaced and becomes phosphorylated, thus increasing the kinase activity. Its function is as follows. Receptor tyrosine kinase that transduces signals from the extracellular matrix into the cytoplasm by binding to MST1 ligand. Regulates many physiological processes including cell survival, migration and differentiation. Ligand binding at the cell surface induces autophosphorylation of RON on its intracellular domain that provides docking sites for downstream signaling molecules. Following activation by ligand, interacts with the PI3-kinase subunit PIK3R1, PLCG1 or the adapter GAB1. Recruitment of these downstream effectors by RON leads to the activation of several signaling cascades including the RAS-ERK, PI3 kinase-AKT, or PLCgamma-PKC. RON signaling activates the wound healing response by promoting epithelial cell migration, proliferation as well as survival at the wound site. Also plays a role in the innate immune response by regulating the migration and phagocytic activity of macrophages. Alternatively, RON can also promote signals such as cell migration and proliferation in response to growth factors other than MST1 ligand. The polypeptide is Macrophage-stimulating protein receptor (MST1R) (Homo sapiens (Human)).